Here is a 306-residue protein sequence, read N- to C-terminus: ADP-polyphosphate phosphotransferase 2 (306 aa).

This sequence belongs to the polyphosphate kinase 2 (PPK2) family. Class I subfamily.

The enzyme catalyses [phosphate](n) + ATP = [phosphate](n+1) + ADP. It catalyses the reaction [phosphate](n) + GTP = [phosphate](n+1) + GDP. Its function is as follows. Uses inorganic polyphosphate (polyP) as a donor to convert ADP to ATP. Can also convert GDP to GTP, with lower efficiency. This is ADP-polyphosphate phosphotransferase 2 from Rhizobium meliloti (strain 1021) (Ensifer meliloti).